We begin with the raw amino-acid sequence, 587 residues long: Pectinesterase 2 (587 aa).

Residues 1–40 form the signal peptide; sequence MAPIKEFISKFSDFKNNKKLILSSAAIALLLLASIVGIAA. 2 N-linked (GlcNAc...) asparagine glycosylation sites follow: Asn-99 and Asn-218. Residues Thr-351 and Gln-381 each contribute to the substrate site. The active-site Proton donor is Asp-404. Cys-418 and Cys-438 form a disulfide bridge. Residue Asp-425 is the Nucleophile of the active site. Positions 493 and 495 each coordinate substrate.

It in the N-terminal section; belongs to the PMEI family. This sequence in the C-terminal section; belongs to the pectinesterase family. Expressed in flower buds.

It localises to the secreted. It is found in the cell wall. The enzyme catalyses [(1-&gt;4)-alpha-D-galacturonosyl methyl ester](n) + n H2O = [(1-&gt;4)-alpha-D-galacturonosyl](n) + n methanol + n H(+). Its pathway is glycan metabolism; pectin degradation; 2-dehydro-3-deoxy-D-gluconate from pectin: step 1/5. Acts in the modification of cell walls via demethylesterification of cell wall pectin. In Arabidopsis thaliana (Mouse-ear cress), this protein is Pectinesterase 2 (PME2).